Here is a 20-residue protein sequence, read N- to C-terminus: Collagenolytic protease 28 kDa (20 aa).

A Peptidase S1 domain is found at I1–F20.

It belongs to the peptidase S1 family.

It catalyses the reaction Hydrolysis of proteins, with broad specificity for peptide bonds. Native collagen is cleaved about 75% of the length of the molecule from the N-terminus. Low activity on small molecule substrates of both trypsin and chymotrypsin.. Its function is as follows. This enzyme is a serine protease capable of degrading the native triple helix of collagen. In Paralithodes camtschaticus (Red king crab), this protein is Collagenolytic protease 28 kDa.